Reading from the N-terminus, the 356-residue chain is CMP-sialic acid transporter 2 (356 aa).

The segment covering 1 to 24 has biased composition (basic and acidic residues); sequence MEYRRVKDQESYDVVSQKDIESPG. The disordered stretch occupies residues 1–44; sequence MEYRRVKDQESYDVVSQKDIESPGERSLSSTSATSSLSTAGASK. At 1–52 the chain is on the cytoplasmic side; that stretch reads MEYRRVKDQESYDVVSQKDIESPGERSLSSTSATSSLSTAGASKGKNSWKLK. Positions 27 to 44 are enriched in low complexity; the sequence is SLSSTSATSSLSTAGASK. Residues 53-73 form a helical membrane-spanning segment; sequence SIVTLALTLLTSSQAILIVWS. Over 74–82 the chain is Lumenal; the sequence is KRAGKYEYS. Residues 83–103 traverse the membrane as a helical segment; sequence VTTANFSVEALKCLLSLIALY. The Cytoplasmic segment spans residues 104–125; it reads RTWNSQGVTEDNRLSTSFDEVS. The chain crosses the membrane as a helical span at residues 126 to 146; it reads VYPIPAILYMVKNLLQYYIFA. At 147-149 the chain is on the lumenal side; sequence YVD. A helical membrane pass occupies residues 150–172; it reads APAYQILKNLNIISTGVLYRIIL. The Cytoplasmic portion of the chain corresponds to 173–175; sequence KKK. A helical membrane pass occupies residues 176–196; sequence LSEIQWAAFILLCAGCTTAQL. The Lumenal segment spans residues 197-211; that stretch reads NPSSDHVLQTPIQGW. Residues 212 to 232 traverse the membrane as a helical segment; that stretch reads VMAIVMALLSGFAGVYTEAII. Over 233 to 239 the chain is Cytoplasmic; that stretch reads KKRPSRN. The chain crosses the membrane as a helical span at residues 240–260; the sequence is INVQNFWLYIFGMLFNLVAIC. Residues 261 to 277 are Lumenal-facing; that stretch reads VQDFDAVMNKGFFHGYS. Residues 278 to 298 form a helical membrane-spanning segment; sequence FITVLMILNHALSGIAVSMVM. Residues 299–314 are Cytoplasmic-facing; the sequence is KYADNIVKVYSTSVAM. Residues 315–335 traverse the membrane as a helical segment; it reads LLTAVVSVFLFGFHLSLAFFL. The Lumenal portion of the chain corresponds to 336-356; it reads GSTVVSVSVYLHSVGKPQPQK.

The protein belongs to the nucleotide-sugar transporter family. CMP-Sialate:CMP antiporter (TC 2.A.7.12) subfamily. Expressed in roots, leaves and stalks.

The protein localises to the golgi apparatus membrane. In terms of biological role, sugar transporter involved in the transport of CMP-sialic acid from the cytoplasm into the Golgi. May transport important nucleotide sugars such as CMP-Kdo (2-keto-3-deoxy-D-manno-octulosonic acid) in physiological conditions. The protein is CMP-sialic acid transporter 2 of Oryza sativa subsp. japonica (Rice).